Consider the following 133-residue polypeptide: Small ribosomal subunit protein uS11 (133 aa).

The protein belongs to the universal ribosomal protein uS11 family. Part of the 30S ribosomal subunit.

Its function is as follows. Located on the platform of the 30S subunit. This is Small ribosomal subunit protein uS11 from Aeropyrum pernix (strain ATCC 700893 / DSM 11879 / JCM 9820 / NBRC 100138 / K1).